The sequence spans 392 residues: tRNA (guanine(6)-N2)-methyltransferase (392 aa).

A THUMP domain is found at serine 73 to threonine 183. S-adenosyl-L-methionine is bound by residues histidine 199–leucine 203, serine 230–threonine 232, glutamate 275, aspartate 303–alanine 304, and asparagine 317.

This sequence belongs to the methyltransferase superfamily.

It localises to the cytoplasm. The enzyme catalyses guanosine(6) in tRNA + S-adenosyl-L-methionine = N(2)-methylguanosine(6) in tRNA + S-adenosyl-L-homocysteine + H(+). Functionally, S-adenosyl-L-methionine-dependent methyltransferase that catalyzes the methylation of the guanosine nucleotide at position 6 (m2G6) in tRNA. The sequence is that of tRNA (guanine(6)-N2)-methyltransferase from Archaeoglobus fulgidus (strain ATCC 49558 / DSM 4304 / JCM 9628 / NBRC 100126 / VC-16).